Here is a 399-residue protein sequence, read N- to C-terminus: Acetate kinase (399 aa).

Position 8 (N8) interacts with Mg(2+). Position 15 (K15) interacts with ATP. R89 is a substrate binding site. The Proton donor/acceptor role is filled by D147. ATP contacts are provided by residues 207–211 (HMGNG), 284–286 (DMR), and 332–336 (GIGEN). E385 contacts Mg(2+).

The protein belongs to the acetokinase family. As to quaternary structure, homodimer. The cofactor is Mg(2+). It depends on Mn(2+) as a cofactor.

Its subcellular location is the cytoplasm. The enzyme catalyses acetate + ATP = acetyl phosphate + ADP. The protein operates within metabolic intermediate biosynthesis; acetyl-CoA biosynthesis; acetyl-CoA from acetate: step 1/2. Catalyzes the formation of acetyl phosphate from acetate and ATP. Can also catalyze the reverse reaction. The sequence is that of Acetate kinase from Streptococcus mutans serotype c (strain ATCC 700610 / UA159).